Here is a 378-residue protein sequence, read N- to C-terminus: GDP-mannose 3,5-epimerase 1 (378 aa).

NAD(+) contacts are provided by residues G36–K62, D60, and D80. Residues G105 and S145–C147 each bind substrate. Residues Y175 and K179 each contribute to the NAD(+) site. The active-site Proton acceptor is Y175. Substrate is bound by residues N204, E217–A219, K226, Q242–R244, R307, and S357.

Belongs to the NAD(P)-dependent epimerase/dehydratase family. As to quaternary structure, homodimer. Requires NAD(+) as cofactor.

It carries out the reaction GDP-alpha-D-mannose = GDP-beta-L-gulose. The catalysed reaction is GDP-beta-L-gulose = GDP-beta-L-galactose. It functions in the pathway cofactor biosynthesis; L-ascorbate biosynthesis via GDP-alpha-D-mannose pathway; L-ascorbate from GDP-alpha-D-mannose: step 1/5. Catalyzes a reversible epimerization of GDP-D-mannose that precedes the committed step in the biosynthesis of vitamin C (L-ascorbate), resulting in the hydrolysis of the highly energetic glycosyl-pyrophosphoryl linkage. Able to catalyze 2 distinct epimerization reactions and can release both GDP-L-galactose and GDP-L-gulose from GDP-mannose. The polypeptide is GDP-mannose 3,5-epimerase 1 (Oryza sativa subsp. indica (Rice)).